The chain runs to 341 residues: Methionine import ATP-binding protein MetN (341 aa).

Residues 2–237 (IELCGLKKSF…PESLARKMLY (236 aa)) enclose the ABC transporter domain. Residue 34–41 (GKSGAGKS) participates in ATP binding.

Belongs to the ABC transporter superfamily. Methionine importer (TC 3.A.1.24) family. The complex is composed of two ATP-binding proteins (MetN), two transmembrane proteins (MetI) and a solute-binding protein (MetQ).

Its subcellular location is the cell inner membrane. It catalyses the reaction L-methionine(out) + ATP + H2O = L-methionine(in) + ADP + phosphate + H(+). The enzyme catalyses D-methionine(out) + ATP + H2O = D-methionine(in) + ADP + phosphate + H(+). In terms of biological role, part of the ABC transporter complex MetNIQ involved in methionine import. Responsible for energy coupling to the transport system. This Legionella pneumophila (strain Lens) protein is Methionine import ATP-binding protein MetN.